An 85-amino-acid polypeptide reads, in one-letter code: ADLDNGEKVFSANCAACHAGGNNAIMPDKTLKKDVLEANSMNTIDAITYQVQNGKNAMPAFGGRLVDEDIEDAANYVLSQSEKGW.

Heme c is bound by residues Cys14, Cys17, His18, and Met58.

The protein belongs to the cytochrome c family. PetJ subfamily. Monomer. In terms of processing, binds 1 heme c group covalently per subunit.

The protein localises to the plastid. The protein resides in the chloroplast thylakoid lumen. Functionally, functions as an electron carrier between membrane-bound cytochrome b6-f and photosystem I in oxygenic photosynthesis. This Pyropia tenera (Nori) protein is Cytochrome c6 (petJ).